The chain runs to 139 residues: Putative pre-16S rRNA nuclease (139 aa).

It belongs to the YqgF nuclease family.

Its subcellular location is the cytoplasm. In terms of biological role, could be a nuclease involved in processing of the 5'-end of pre-16S rRNA. This chain is Putative pre-16S rRNA nuclease, found in Legionella pneumophila (strain Lens).